A 197-amino-acid chain; its full sequence is UPF0301 protein Adeh_3962 (197 aa).

Belongs to the UPF0301 (AlgH) family.

This Anaeromyxobacter dehalogenans (strain 2CP-C) protein is UPF0301 protein Adeh_3962.